The primary structure comprises 520 residues: Bifunctional purine biosynthesis protein PurH (520 aa).

The 146-residue stretch at 1 to 146 (MAPVALLSVS…KNHADVAVLT (146 aa)) folds into the MGS-like domain.

It belongs to the PurH family.

It catalyses the reaction (6R)-10-formyltetrahydrofolate + 5-amino-1-(5-phospho-beta-D-ribosyl)imidazole-4-carboxamide = 5-formamido-1-(5-phospho-D-ribosyl)imidazole-4-carboxamide + (6S)-5,6,7,8-tetrahydrofolate. It carries out the reaction IMP + H2O = 5-formamido-1-(5-phospho-D-ribosyl)imidazole-4-carboxamide. It participates in purine metabolism; IMP biosynthesis via de novo pathway; 5-formamido-1-(5-phospho-D-ribosyl)imidazole-4-carboxamide from 5-amino-1-(5-phospho-D-ribosyl)imidazole-4-carboxamide (10-formyl THF route): step 1/1. Its pathway is purine metabolism; IMP biosynthesis via de novo pathway; IMP from 5-formamido-1-(5-phospho-D-ribosyl)imidazole-4-carboxamide: step 1/1. The sequence is that of Bifunctional purine biosynthesis protein PurH from Synechococcus sp. (strain CC9605).